The following is a 90-amino-acid chain: Probable Fe(2+)-trafficking protein (90 aa).

Belongs to the Fe(2+)-trafficking protein family.

Functionally, could be a mediator in iron transactions between iron acquisition and iron-requiring processes, such as synthesis and/or repair of Fe-S clusters in biosynthetic enzymes. This Aeromonas salmonicida (strain A449) protein is Probable Fe(2+)-trafficking protein.